We begin with the raw amino-acid sequence, 295 residues long: Bifunctional protein FolD (295 aa).

NADP(+) contacts are provided by residues 165–167, serine 192, and isoleucine 233; that span reads GRG.

Belongs to the tetrahydrofolate dehydrogenase/cyclohydrolase family. As to quaternary structure, homodimer.

The catalysed reaction is (6R)-5,10-methylene-5,6,7,8-tetrahydrofolate + NADP(+) = (6R)-5,10-methenyltetrahydrofolate + NADPH. The enzyme catalyses (6R)-5,10-methenyltetrahydrofolate + H2O = (6R)-10-formyltetrahydrofolate + H(+). The protein operates within one-carbon metabolism; tetrahydrofolate interconversion. Functionally, catalyzes the oxidation of 5,10-methylenetetrahydrofolate to 5,10-methenyltetrahydrofolate and then the hydrolysis of 5,10-methenyltetrahydrofolate to 10-formyltetrahydrofolate. The protein is Bifunctional protein FolD of Tropheryma whipplei (strain TW08/27) (Whipple's bacillus).